We begin with the raw amino-acid sequence, 236 residues long: LexA repressor (236 aa).

The H-T-H motif DNA-binding region spans 26-46 (FDEMKEALDLRSKSGIHRLIT). Catalysis depends on for autocatalytic cleavage activity residues Ser157 and Lys195.

It belongs to the peptidase S24 family. Homodimer.

The enzyme catalyses Hydrolysis of Ala-|-Gly bond in repressor LexA.. In terms of biological role, represses a number of genes involved in the response to DNA damage (SOS response), including recA and lexA. In the presence of single-stranded DNA, RecA interacts with LexA causing an autocatalytic cleavage which disrupts the DNA-binding part of LexA, leading to derepression of the SOS regulon and eventually DNA repair. The sequence is that of LexA repressor from Azorhizobium caulinodans (strain ATCC 43989 / DSM 5975 / JCM 20966 / LMG 6465 / NBRC 14845 / NCIMB 13405 / ORS 571).